A 270-amino-acid chain; its full sequence is Photosystem I chlorophyll a/b-binding protein 6, chloroplastic (270 aa).

Residues 1-33 constitute a chloroplast transit peptide; the sequence is MAFAIASALTSTLTLSTSRVQNPTQRRPHVAST. Positions 16 to 36 are disordered; sequence STSRVQNPTQRRPHVASTSST. The span at 19 to 36 shows a compositional bias: polar residues; sequence RVQNPTQRRPHVASTSST. A chlorophyll b-binding site is contributed by W68. Residues F88 and E107 each contribute to the chlorophyll a site. R112 is a chlorophyll b binding site. The helical transmembrane segment at 146-164 threads the bilayer; that stretch reads YFADSTTLFVAQMVLMGWA. Residues E165 and R168 each contribute to the chlorophyll b site. Chlorophyll a-binding residues include K221, E222, N225, R227, Q239, and H254. A helical membrane pass occupies residues 228–244; the sequence is LAMLAFLGFCFQATYTS.

It belongs to the light-harvesting chlorophyll a/b-binding (LHC) protein family. The LHC complex consists of chlorophyll a-b binding proteins. Homodimer. Binds pigments. Element of the NAD(P)H dehydrogenase-photosystem I supercomplex (NDH-PSI). The cofactor is Binds at least 14 chlorophylls (8 Chl-a and 6 Chl-b) and carotenoids such as lutein and neoxanthin.. Post-translationally, photoregulated by reversible phosphorylation of its threonine residues.

It is found in the plastid. The protein localises to the chloroplast thylakoid membrane. Functionally, the light-harvesting complex (LHC) functions as a light receptor, it captures and delivers excitation energy to photosystems with which it is closely associated. Seems involved in the function of the photosystem I in low light conditions, when other LHCA proteins are less abundant. Required, together with LHCA5, for the formation of a full-size NAD(P)H dehydrogenase-photosystem I supercomplex (NDH-PSI) that triggers cyclic and chlororespiratory electron transport in chloroplast thylakoids, especially under stress conditions (e.g. increased light intensity). The protein is Photosystem I chlorophyll a/b-binding protein 6, chloroplastic of Arabidopsis thaliana (Mouse-ear cress).